The primary structure comprises 501 residues: Carboxypeptidase 1 (501 aa).

In terms of domain architecture, Peptidase M32 spans I3–S496. The short motif at H234–F236 is the HPF element. The short motif at D244–T248 is the DXRXT element. H265 contacts Zn(2+). Residues H265–H269 carry the HEXXH motif. The Proton donor/acceptor role is filled by E266. 2 residues coordinate Zn(2+): H269 and E295. Positions H294–Q297 match the HES/GQ motif. An I/NRXXA/SD motif is present at residues I347 to D352. A GXXQDXHW motif is present at residues G402–W409.

This sequence belongs to the peptidase M32 family. Homodimer. The cofactor is Zn(2+).

It catalyses the reaction Release of a C-terminal amino acid with broad specificity, except for -Pro.. In terms of biological role, broad specificity carboxypetidase that releases amino acids sequentially from the C-terminus, including neutral, aromatic, polar and basic residues. Has lower activity with substrates ending with His or Trp. In Bacillus subtilis (strain 168), this protein is Carboxypeptidase 1 (ypwA).